The following is a 295-amino-acid chain: Probable alpha-L-glutamate ligase 1 (295 aa).

An ATP-grasp domain is found at 104–287; sequence MQLLSRKGIG…VANAIIEFIE (184 aa). ATP is bound by residues K141, 178–179, D187, and 211–213; these read EY and RSN. Positions 248, 260, and 262 each coordinate Mg(2+). Positions 248, 260, and 262 each coordinate Mn(2+).

It belongs to the RimK family. Mg(2+) is required as a cofactor. It depends on Mn(2+) as a cofactor.

The polypeptide is Probable alpha-L-glutamate ligase 1 (Shewanella denitrificans (strain OS217 / ATCC BAA-1090 / DSM 15013)).